We begin with the raw amino-acid sequence, 132 residues long: MRDSVLSVIFALALFLECYTPSMAIPMGKMEDTALEQDTLDSLLNESVADKNPDSVRSGSSKIIVLADSGMWKNLNRGLPLYKLKAAAAGLDRALTLDRREADQDLSPSISIVRRDTMRCMVGRVYRPCWEV.

A signal peptide spans M1 to A24. A disulfide bond links C120 and C129.

This sequence belongs to the MCH family. Pituitary gland. Produced in neurons of lateral basal hypothalamus which project both to the brain and to the neural lobe of the pituitary gland from where MCH is released.

In terms of biological role, plays a role in skin pigmentation by antagonizing the action of melanotropin alpha. Induces melanin concentration within the melanophores. May participate in the control of the hypothalamo-pituitary adrenal gland axis by inhibiting the release of ACTH. This Oncorhynchus kisutch (Coho salmon) protein is Pro-MCH 1 (mch1).